We begin with the raw amino-acid sequence, 307 residues long: Methionyl-tRNA formyltransferase (307 aa).

Ser109–Pro112 is a binding site for (6S)-5,6,7,8-tetrahydrofolate.

It belongs to the Fmt family.

It catalyses the reaction L-methionyl-tRNA(fMet) + (6R)-10-formyltetrahydrofolate = N-formyl-L-methionyl-tRNA(fMet) + (6S)-5,6,7,8-tetrahydrofolate + H(+). Its function is as follows. Attaches a formyl group to the free amino group of methionyl-tRNA(fMet). The formyl group appears to play a dual role in the initiator identity of N-formylmethionyl-tRNA by promoting its recognition by IF2 and preventing the misappropriation of this tRNA by the elongation apparatus. This chain is Methionyl-tRNA formyltransferase, found in Orientia tsutsugamushi (strain Boryong) (Rickettsia tsutsugamushi).